The following is a 230-amino-acid chain: Large ribosomal subunit protein uL1 (230 aa).

Belongs to the universal ribosomal protein uL1 family. Part of the 50S ribosomal subunit.

Binds directly to 23S rRNA. The L1 stalk is quite mobile in the ribosome, and is involved in E site tRNA release. Its function is as follows. Protein L1 is also a translational repressor protein, it controls the translation of the L11 operon by binding to its mRNA. The chain is Large ribosomal subunit protein uL1 from Metamycoplasma arthritidis (strain 158L3-1) (Mycoplasma arthritidis).